The primary structure comprises 135 residues: MASLRPLVKPKIIKKWTKKFIRHQSDRYVKIKRNWRKPRGIDNRVRRRFKGQILMPNIGYGSNKKTKHMLPSGFRKFLVHSVKELEVLLMCNKSYCAKIAHNVSSKNCKAIVERVAQLAIRVTNPNARLRSEENE.

Residue Lys9 forms a Glycyl lysine isopeptide (Lys-Gly) (interchain with G-Cter in SUMO2) linkage. An N6-succinyllysine modification is found at Lys50. A Phosphoserine modification is found at Ser62.

It belongs to the eukaryotic ribosomal protein eL32 family. Component of the large ribosomal subunit.

It localises to the cytoplasm. Component of the large ribosomal subunit. The ribosome is a large ribonucleoprotein complex responsible for the synthesis of proteins in the cell. In Oryctolagus cuniculus (Rabbit), this protein is Large ribosomal subunit protein eL32 (RPL32).